Consider the following 113-residue polypeptide: Ribonuclease P protein component (113 aa).

This sequence belongs to the RnpA family. In terms of assembly, consists of a catalytic RNA component (M1 or rnpB) and a protein subunit.

It catalyses the reaction Endonucleolytic cleavage of RNA, removing 5'-extranucleotides from tRNA precursor.. Its function is as follows. RNaseP catalyzes the removal of the 5'-leader sequence from pre-tRNA to produce the mature 5'-terminus. It can also cleave other RNA substrates such as 4.5S RNA. The protein component plays an auxiliary but essential role in vivo by binding to the 5'-leader sequence and broadening the substrate specificity of the ribozyme. The chain is Ribonuclease P protein component from Ureaplasma parvum serovar 3 (strain ATCC 27815 / 27 / NCTC 11736).